The primary structure comprises 139 residues: Nucleoside diphosphate kinase (139 aa).

Positions 11, 59, 87, 93, 104, and 114 each coordinate ATP. Histidine 117 (pros-phosphohistidine intermediate) is an active-site residue.

The protein belongs to the NDK family. As to quaternary structure, homotetramer. Mg(2+) is required as a cofactor.

The protein localises to the cytoplasm. It carries out the reaction a 2'-deoxyribonucleoside 5'-diphosphate + ATP = a 2'-deoxyribonucleoside 5'-triphosphate + ADP. It catalyses the reaction a ribonucleoside 5'-diphosphate + ATP = a ribonucleoside 5'-triphosphate + ADP. Its function is as follows. Major role in the synthesis of nucleoside triphosphates other than ATP. The ATP gamma phosphate is transferred to the NDP beta phosphate via a ping-pong mechanism, using a phosphorylated active-site intermediate. The sequence is that of Nucleoside diphosphate kinase from Moorella thermoacetica (strain ATCC 39073 / JCM 9320).